The primary structure comprises 326 residues: tRNA uridine(34) hydroxylase (326 aa).

One can recognise a Rhodanese domain in the interval serine 123–serine 217. Cysteine 177 acts as the Cysteine persulfide intermediate in catalysis. Positions valine 304 to alanine 326 are disordered.

This sequence belongs to the TrhO family.

The catalysed reaction is uridine(34) in tRNA + AH2 + O2 = 5-hydroxyuridine(34) in tRNA + A + H2O. Its function is as follows. Catalyzes oxygen-dependent 5-hydroxyuridine (ho5U) modification at position 34 in tRNAs. This is tRNA uridine(34) hydroxylase from Shewanella sediminis (strain HAW-EB3).